The chain runs to 153 residues: Ribonuclease H (153 aa).

The region spanning 1-142 (MTDQIEIFTD…ADELARRGVD (142 aa)) is the RNase H type-1 domain. Residues Asp-10, Glu-48, Asp-70, and Asp-134 each coordinate Mg(2+).

This sequence belongs to the RNase H family. As to quaternary structure, monomer. Mg(2+) is required as a cofactor.

It is found in the cytoplasm. The enzyme catalyses Endonucleolytic cleavage to 5'-phosphomonoester.. Endonuclease that specifically degrades the RNA of RNA-DNA hybrids. The protein is Ribonuclease H of Aromatoleum aromaticum (strain DSM 19018 / LMG 30748 / EbN1) (Azoarcus sp. (strain EbN1)).